The chain runs to 184 residues: Protein GrpE (184 aa).

The span at 1–10 (MTDTPPENEE) shows a compositional bias: acidic residues. Positions 1-22 (MTDTPPENEEQHESNVQNENEV) are disordered.

Belongs to the GrpE family. Homodimer.

Its subcellular location is the cytoplasm. Participates actively in the response to hyperosmotic and heat shock by preventing the aggregation of stress-denatured proteins, in association with DnaK and GrpE. It is the nucleotide exchange factor for DnaK and may function as a thermosensor. Unfolded proteins bind initially to DnaJ; upon interaction with the DnaJ-bound protein, DnaK hydrolyzes its bound ATP, resulting in the formation of a stable complex. GrpE releases ADP from DnaK; ATP binding to DnaK triggers the release of the substrate protein, thus completing the reaction cycle. Several rounds of ATP-dependent interactions between DnaJ, DnaK and GrpE are required for fully efficient folding. This is Protein GrpE from Chlamydia pneumoniae (Chlamydophila pneumoniae).